A 3848-amino-acid polypeptide reads, in one-letter code: Intermembrane lipid transfer protein tipC (3848 aa).

One can recognise a Chorein N-terminal domain in the interval H4–L112. 12 disordered regions span residues I243 to E268, L450 to G481, Q966 to L985, K1174 to S1219, E1326 to T1345, E1907 to T1926, D2024 to P2047, I2209 to L2290, F2330 to L2353, K2509 to G2541, G3209 to D3228, and I3310 to Q3342. 2 stretches are compositionally biased toward low complexity: residues Q251–G260 and L452–S477. Residues N1175–N1190 show a composition bias toward low complexity. Over residues I1191–I1200 the composition is skewed to polar residues. The span at S1202–L1211 shows a compositional bias: pro residues. Low complexity predominate over residues T1333 to T1345. Composition is skewed to low complexity over residues D2029–N2044, N2217–N2289, and S2335–L2353. Low complexity-rich tracts occupy residues N3212–D3228 and N3311–Q3342.

It belongs to the VPS13 family.

It is found in the membrane. In terms of biological role, mediates the transfer of lipids between membranes at organelle contact sites. In Dictyostelium discoideum (Social amoeba), this protein is Intermembrane lipid transfer protein tipC (tipC).